Reading from the N-terminus, the 317-residue chain is Thymidylate synthase (317 aa).

Residues arginine 24 and 179 to 180 contribute to the dUMP site; that span reads RR. Cysteine 199 acts as the Nucleophile in catalysis. DUMP-binding positions include 219-222, asparagine 230, and 260-262; these read RSAD and HIY. Aspartate 222 serves as a coordination point for (6R)-5,10-methylene-5,6,7,8-tetrahydrofolate. Residue alanine 316 participates in (6R)-5,10-methylene-5,6,7,8-tetrahydrofolate binding.

It belongs to the thymidylate synthase family. Bacterial-type ThyA subfamily. As to quaternary structure, homodimer.

The protein resides in the cytoplasm. It carries out the reaction dUMP + (6R)-5,10-methylene-5,6,7,8-tetrahydrofolate = 7,8-dihydrofolate + dTMP. Its pathway is pyrimidine metabolism; dTTP biosynthesis. Catalyzes the reductive methylation of 2'-deoxyuridine-5'-monophosphate (dUMP) to 2'-deoxythymidine-5'-monophosphate (dTMP) while utilizing 5,10-methylenetetrahydrofolate (mTHF) as the methyl donor and reductant in the reaction, yielding dihydrofolate (DHF) as a by-product. This enzymatic reaction provides an intracellular de novo source of dTMP, an essential precursor for DNA biosynthesis. The polypeptide is Thymidylate synthase (Oceanobacillus iheyensis (strain DSM 14371 / CIP 107618 / JCM 11309 / KCTC 3954 / HTE831)).